The sequence spans 283 residues: Thymidylate synthase (283 aa).

DUMP is bound at residue R22. C160 acts as the Nucleophile in catalysis. Residues 180 to 183 (RSCD), N191, and 221 to 223 (HIY) contribute to the dUMP site. (6R)-5,10-methylene-5,6,7,8-tetrahydrofolate is bound at residue D183. S282 contributes to the (6R)-5,10-methylene-5,6,7,8-tetrahydrofolate binding site.

The protein belongs to the thymidylate synthase family. Bacterial-type ThyA subfamily. In terms of assembly, homodimer.

Its subcellular location is the cytoplasm. The enzyme catalyses dUMP + (6R)-5,10-methylene-5,6,7,8-tetrahydrofolate = 7,8-dihydrofolate + dTMP. The protein operates within pyrimidine metabolism; dTTP biosynthesis. Functionally, catalyzes the reductive methylation of 2'-deoxyuridine-5'-monophosphate (dUMP) to 2'-deoxythymidine-5'-monophosphate (dTMP) while utilizing 5,10-methylenetetrahydrofolate (mTHF) as the methyl donor and reductant in the reaction, yielding dihydrofolate (DHF) as a by-product. This enzymatic reaction provides an intracellular de novo source of dTMP, an essential precursor for DNA biosynthesis. In Psychromonas ingrahamii (strain DSM 17664 / CCUG 51855 / 37), this protein is Thymidylate synthase.